The chain runs to 82 residues: uncharacterized protein (82 aa).

A disordered region spans residues 1–20 (MMNLSPPFKSPSGSSRAGRR).

This is an uncharacterized protein from Archaeoglobus fulgidus (strain ATCC 49558 / DSM 4304 / JCM 9628 / NBRC 100126 / VC-16).